The chain runs to 126 residues: Glycine cleavage system H protein (126 aa).

Residues 22 to 104 (VATVGITEYA…YEKAWMVKIE (83 aa)) form the Lipoyl-binding domain. Residue K63 is modified to N6-lipoyllysine.

It belongs to the GcvH family. As to quaternary structure, the glycine cleavage system is composed of four proteins: P, T, L and H. (R)-lipoate serves as cofactor.

Functionally, the glycine cleavage system catalyzes the degradation of glycine. The H protein shuttles the methylamine group of glycine from the P protein to the T protein. Its function is as follows. Is also involved in protein lipoylation via its role as an octanoyl/lipoyl carrier protein intermediate. This is Glycine cleavage system H protein from Staphylococcus epidermidis (strain ATCC 12228 / FDA PCI 1200).